The chain runs to 504 residues: UDP-N-acetylmuramoylalanine--D-glutamate ligase (504 aa).

129 to 135 (GTNGKTT) is an ATP binding site.

Belongs to the MurCDEF family.

Its subcellular location is the cytoplasm. It catalyses the reaction UDP-N-acetyl-alpha-D-muramoyl-L-alanine + D-glutamate + ATP = UDP-N-acetyl-alpha-D-muramoyl-L-alanyl-D-glutamate + ADP + phosphate + H(+). It participates in cell wall biogenesis; peptidoglycan biosynthesis. In terms of biological role, cell wall formation. Catalyzes the addition of glutamate to the nucleotide precursor UDP-N-acetylmuramoyl-L-alanine (UMA). The polypeptide is UDP-N-acetylmuramoylalanine--D-glutamate ligase (Burkholderia thailandensis (strain ATCC 700388 / DSM 13276 / CCUG 48851 / CIP 106301 / E264)).